The chain runs to 365 residues: Mitogen-activated protein kinase HOG1 (365 aa).

In terms of domain architecture, Protein kinase spans 20-306 (YSDLQPVGMG…ATNALAHEYL (287 aa)). ATP contacts are provided by residues 26 to 34 (VGMGAFGLV) and Lys49. Asp148 (proton acceptor) is an active-site residue. The TXY signature appears at 178–180 (TGY).

It belongs to the protein kinase superfamily. Ser/Thr protein kinase family. MAP kinase subfamily. HOG1 sub-subfamily. Requires Mg(2+) as cofactor.

The protein localises to the cytoplasm. The protein resides in the nucleus. It catalyses the reaction L-seryl-[protein] + ATP = O-phospho-L-seryl-[protein] + ADP + H(+). It carries out the reaction L-threonyl-[protein] + ATP = O-phospho-L-threonyl-[protein] + ADP + H(+). Proline-directed serine/threonine-protein kinase involved in a signal transduction pathway that is activated by changes in the osmolarity of the extracellular environment. Controls osmotic regulation of transcription of target genes. Involved in environmental stress response, hyphal growth, conidiation and possibly secondary metabolism such as ustiloxin biosynthesis or the biosynthesis of other phytotoxic compounds that are inhibitory to rice shoot growth during seed germination. Plays a key role in responses to cell wall and membrane stresses but not oxidative stress. In Ustilaginoidea virens (Rice false smut fungus), this protein is Mitogen-activated protein kinase HOG1.